Here is a 186-residue protein sequence, read N- to C-terminus: Elongation factor P (186 aa).

The protein belongs to the elongation factor P family.

It is found in the cytoplasm. It participates in protein biosynthesis; polypeptide chain elongation. Its function is as follows. Involved in peptide bond synthesis. Stimulates efficient translation and peptide-bond synthesis on native or reconstituted 70S ribosomes in vitro. Probably functions indirectly by altering the affinity of the ribosome for aminoacyl-tRNA, thus increasing their reactivity as acceptors for peptidyl transferase. This chain is Elongation factor P, found in Synechococcus sp. (strain CC9902).